The primary structure comprises 438 residues: Glutamyl-tRNA(Gln) amidotransferase subunit D (438 aa).

The Asparaginase/glutaminase domain occupies 91 to 421 (KNLSILSTGG…SEIYEIMKTN (331 aa)). Residues T101, T177, D178, and K254 contribute to the active site.

The protein belongs to the asparaginase 1 family. GatD subfamily. Heterodimer of GatD and GatE.

The catalysed reaction is L-glutamyl-tRNA(Gln) + L-glutamine + ATP + H2O = L-glutaminyl-tRNA(Gln) + L-glutamate + ADP + phosphate + H(+). In terms of biological role, allows the formation of correctly charged Gln-tRNA(Gln) through the transamidation of misacylated Glu-tRNA(Gln) in organisms which lack glutaminyl-tRNA synthetase. The reaction takes place in the presence of glutamine and ATP through an activated gamma-phospho-Glu-tRNA(Gln). The GatDE system is specific for glutamate and does not act on aspartate. The protein is Glutamyl-tRNA(Gln) amidotransferase subunit D of Methanosphaera stadtmanae (strain ATCC 43021 / DSM 3091 / JCM 11832 / MCB-3).